We begin with the raw amino-acid sequence, 386 residues long: Alkanesulfonate monooxygenase (386 aa).

It belongs to the SsuD family.

It catalyses the reaction an alkanesulfonate + FMNH2 + O2 = an aldehyde + FMN + sulfite + H2O + 2 H(+). Catalyzes the desulfonation of aliphatic sulfonates. This chain is Alkanesulfonate monooxygenase, found in Delftia acidovorans (strain DSM 14801 / SPH-1).